The sequence spans 2615 residues: Polycystin-1-like protein 1 (2615 aa).

At 1-1524 (MDVDEDQHAV…VSSISEFQSH (1524 aa)) the chain is on the extracellular side. Residues 17 to 93 (IQANPELCVS…GTNSFSNPPP (77 aa)) are disordered. Residues N224, N297, N306, N390, N440, N534, and N619 are each glycosylated (N-linked (GlcNAc...) asparagine). PKD domains follow at residues 291–373 (SVSV…VQKR) and 375–456 (MANR…VREP). Residues 457–1349 (CQPPPVKNMG…GEEDYLHKRN (893 aa)) enclose the REJ domain. Residues 749–815 (SSKSDLPSNL…GEPMEEYSSL (67 aa)) form a disordered region. The segment covering 778 to 789 (ALSNLGSISAES) has biased composition (polar residues). The 149-residue stretch at 1364–1512 (RFTGLSENSQ…SVLRRKLNAT (149 aa)) folds into the GAIN-B domain. N-linked (GlcNAc...) asparagine glycosylation occurs at N1458. Cysteines 1468 and 1494 form a disulfide. The GPS stretch occupies residues 1468–1512 (CVFWDKTEWRSEGPYPQPGSSPEKVNCSYHHLAPVSVLRRKLNAT). N1510 is a glycosylation site (N-linked (GlcNAc...) asparagine). A helical transmembrane segment spans residues 1525-1545 (PHNLLPGIFSAFLLVLYGILV). Topologically, residues 1546-1732 (SKSRYVDCHE…PPSRSYLHTQ (187 aa)) are cytoplasmic. The PLAT domain occupies 1573-1690 (QLYAVVIDTG…LGGHVLREFF (118 aa)). Residues 1733–1753 (RLAVSFCLLCVYSCLTALVTV) traverse the membrane as a helical segment. The Extracellular segment spans residues 1754-1772 (RDHQQRPLDVGPTAITLEP). The helical transmembrane segment at 1773-1793 (FCMALLCTLLACPVAQLLSLL) threads the bilayer. At 1794–1905 (FRCSKEARGD…ELGSQKSRVC (112 aa)) the chain is on the cytoplasmic side. Residues 1807 to 1840 (STQWPLRGVKTETPQGHDSSGRPDSRQPSPHPTS) are disordered. The helical transmembrane segment at 1906–1926 (LLWSSSVAWAISGSASLACGL) threads the bilayer. The Extracellular portion of the chain corresponds to 1927–1950 (GTGFLGYWFVPAQCMWWLYLLLLS). The helical transmembrane segment at 1951-1971 (LVCCAFITQPLMICLAALVFA) threads the bilayer. Over 1972 to 2057 (WKRKHDSKFF…ERLRRESIMQ (86 aa)) the chain is Cytoplasmic. The helical transmembrane segment at 2058 to 2078 (AALRDMTTHSIMLLLLLFIAY) threads the bilayer. Residues 2079 to 2288 (GRFCPGEISL…IFYSDSALKY (210 aa)) are Extracellular-facing. The helical transmembrane segment at 2289–2309 (LLMLSELLFLVLNVIHLCFQL) threads the bilayer. At 2310–2332 (WGMTTKGILSYWRKPRHWLELSM) the chain is on the cytoplasmic side. A helical transmembrane segment spans residues 2333–2353 (VGVAIAYYAASGHLTTLAVNI). Topologically, residues 2354 to 2379 (TDQFHKGLYQRLVDIGLMVSWHQRAR) are extracellular. The chain crosses the membrane as a helical span at residues 2380–2400 (CLQGILLFLWMLKYVHLLSSL). Residues 2401-2405 (STMTP) lie on the Cytoplasmic side of the membrane. A helical membrane pass occupies residues 2406 to 2426 (FSAVTCFPLFRVLLVGALLLA). The Extracellular segment spans residues 2427–2483 (AHYHSRWFLLFTGTLSHGTSAEAFPGLLLQFPGRSKKDSWHNCLKSDHGVMRCYYGT). Residues 2484-2504 (LFLLLATLGFRMLRATFLTVF) form a helical membrane-spanning segment. The Cytoplasmic segment spans residues 2505–2615 (QNRKSSHRKP…VSGPLAAESE (111 aa)). The segment at 2589-2615 (RAGDSPPVGSSEYQATGVSGPLAAESE) is disordered.

It belongs to the polycystin family. Heterodimer. Interacts with PKD2 to form a calcium channel. Interacts with PKD2L1; to form ciliary calcium channel. May interact with GNA12, GNAS, GNAI1 and GNAI2. As to expression, in testis, strong expression in Leydig cells, low level in seminal ducts, myoid cells and tunica vaginalis. Other tissues, including adrenal gland and heart myocardium, also show low expression. In embryo, highly expressed in the node.

The protein localises to the cell projection. It is found in the cilium membrane. Its function is as follows. Component of a calcium-permeant ion channel formed by PKD1L2 and PKD1L1 in primary cilia, where it controls cilium calcium concentration, without affecting cytoplasmic calcium concentration, and regulates sonic hedgehog/SHH signaling and GLI2 transcription. The PKD1L1:PKD2L1 channel complex is mechanosensitive only at high pressures and is highly temperature sensitive. Also involved in left/right axis specification downstream of nodal flow by forming a complex with PKD2 in cilia to facilitate flow detection in left/right patterning. May function as a G-protein-coupled receptor. The protein is Polycystin-1-like protein 1 of Mus musculus (Mouse).